The following is a 621-amino-acid chain: Auxin response factor 13 (621 aa).

Residues 124–228 (FSKILTASDV…ELRFGIRRAK (105 aa)) constitute a DNA-binding region (TF-B3). A PB1 domain is found at 508-600 (RSRIKVHMQG…EIKKMKLKNK (93 aa)).

Belongs to the ARF family. As to quaternary structure, homodimers and heterodimers.

The protein localises to the nucleus. Functionally, auxin response factors (ARFs) are transcriptional factors that bind specifically to the DNA sequence 5'-TGTCTC-3' found in the auxin-responsive promoter elements (AuxREs). Could act as transcriptional activator or repressor. Formation of heterodimers with Aux/IAA proteins may alter their ability to modulate early auxin response genes expression. The protein is Auxin response factor 13 (ARF13) of Arabidopsis thaliana (Mouse-ear cress).